Reading from the N-terminus, the 95-residue chain is Pancreatic polypeptide prohormone (95 aa).

The signal sequence occupies residues 1–29 (MAAARLCLSLLLLSTCVALLLQPLLGAQG). Tyrosine amide is present on tyrosine 65. Positions 89 to 95 (ELSPLDL) are excised as a propeptide.

Belongs to the NPY family.

It is found in the secreted. Functionally, hormone secreted by pancreatic cells that acts as a regulator of pancreatic and gastrointestinal functions probably by signaling through the G protein-coupled receptor NPY4R2. This chain is Pancreatic polypeptide prohormone, found in Homo sapiens (Human).